Reading from the N-terminus, the 482-residue chain is Aspartyl/glutamyl-tRNA(Asn/Gln) amidotransferase subunit B (482 aa).

The protein belongs to the GatB/GatE family. GatB subfamily. In terms of assembly, heterotrimer of A, B and C subunits.

The enzyme catalyses L-glutamyl-tRNA(Gln) + L-glutamine + ATP + H2O = L-glutaminyl-tRNA(Gln) + L-glutamate + ADP + phosphate + H(+). It catalyses the reaction L-aspartyl-tRNA(Asn) + L-glutamine + ATP + H2O = L-asparaginyl-tRNA(Asn) + L-glutamate + ADP + phosphate + 2 H(+). In terms of biological role, allows the formation of correctly charged Asn-tRNA(Asn) or Gln-tRNA(Gln) through the transamidation of misacylated Asp-tRNA(Asn) or Glu-tRNA(Gln) in organisms which lack either or both of asparaginyl-tRNA or glutaminyl-tRNA synthetases. The reaction takes place in the presence of glutamine and ATP through an activated phospho-Asp-tRNA(Asn) or phospho-Glu-tRNA(Gln). This Thermotoga petrophila (strain ATCC BAA-488 / DSM 13995 / JCM 10881 / RKU-1) protein is Aspartyl/glutamyl-tRNA(Asn/Gln) amidotransferase subunit B.